Reading from the N-terminus, the 59-residue chain is MEDKYILLSAVETFKSRLEELLMQSAKVQKQTMLRKELASSMNDMASTVQEALNKKKSS.

As to quaternary structure, component of the inner kinetochore constitutive centromere-associated network (CCAN) (also known as central kinetochore Sim4 complex in fission yeast), which is composed of at least cnl2, cnp3, cnp20, fta1, fta2, fta3, fta4, fta6, fta7, mal2, mhf1, mhf2, mis6, mis15, mis17, sim4 and wip1.

It localises to the nucleus. It is found in the chromosome. The protein resides in the centromere. The protein localises to the kinetochore. Its subcellular location is the cytoplasm. It localises to the cytoskeleton. It is found in the microtubule organizing center. The protein resides in the spindle pole body. Its function is as follows. Component of the kinetochore, a multiprotein complex that assembles on centromeric DNA and attaches chromosomes to spindle microtubules, mediating chromosome segregation and sister chromatid segregation during meiosis and mitosis. Component of the inner kinetochore constitutive centromere-associated network (CCAN), which serves as a structural platform for outer kinetochore assembly. The protein is Inner kinetochore subunit fta6 (fta6) of Schizosaccharomyces pombe (strain 972 / ATCC 24843) (Fission yeast).